Reading from the N-terminus, the 341-residue chain is Peroxisomal membrane protein import receptor PEX19 (341 aa).

The segment covering 1–18 (MNENEYDNFDDLDDLLDE) has biased composition (acidic residues). 5 disordered regions span residues 1–26 (MNENEYDNFDDLDDLLDEDPTKLDEQ), 39–66 (DSENKEKNAESKDSDGVQVANESEEDPE), 109–141 (VPRQQMEQGSSSLKSNSTDKGTLNGSNPGFKNI), 293–312 (LGDSPIRSANSPLKHGNEEE), and 318–341 (LEIDGNDPNLGNLDKELTDGCKQQ). Basic and acidic residues predominate over residues 39–53 (DSENKEKNAESKDSD). A Phosphoserine modification is found at serine 61. Over residues 113 to 141 (QMEQGSSSLKSNSTDKGTLNGSNPGFKNI) the composition is skewed to polar residues. Phosphoserine is present on serine 303. Residues 330–341 (LDKELTDGCKQQ) are compositionally biased toward basic and acidic residues. Cysteine 338 is subject to Cysteine methyl ester. The S-farnesyl cysteine moiety is linked to residue cysteine 338. Residues 339–341 (KQQ) constitute a propeptide, removed in mature form.

Belongs to the peroxin-19 family. As to quaternary structure, interacts (farnesylated) with PEX3; farnesylation is required for this interaction. Interacts with PEX2, PEX5, PEX10, PEX11, PEX12, PEX13, PEX14, PEX17, PEX22, PEX25, PEX30 and PEX32; the interaction requires well-defined PEX19-binding sites within the peroxisomal membrane protein targeting signal (mPTS) of the PMPs and is independent on the presence of PEX3. Interacts with VPS1.

Its subcellular location is the cytoplasm. The protein localises to the peroxisome membrane. It is found in the endoplasmic reticulum membrane. In terms of biological role, required for proper post-translational import and stabilization of peroxisomal membrane proteins (PMPs). Acts as a cytosolic import receptor for PMPs and delivers them to the docking factor PEX3 at the peroxisomal membrane for subsequent insertion into the membrane. Acts as a chaperone in stabilizing or maintaining PMPs in the lipid bilayer. Directs PEX17, a peripheral component of the peroxisomal matrix protein translocation machinery, to peroxisomes. Stabilizes VPS1, a protein required for peroxisomal fission, at the peroxisomal membrane. Also acts in conjunction with PEX3 in the formation of peroxisomes from preperoxisomal compartments at the endoplasmic reticulum during de novo peroxisome synthesis, probably via the import of additional PMPs. The chain is Peroxisomal membrane protein import receptor PEX19 (PEX19) from Saccharomyces cerevisiae (strain YJM789) (Baker's yeast).